We begin with the raw amino-acid sequence, 381 residues long: Choline transport ATP-binding protein OpuBA (381 aa).

In terms of domain architecture, ABC transporter spans 2 to 236; it reads LTLENVSKTY…PADEFVEEFI (235 aa). 35–42 contributes to the ATP binding site; the sequence is GPSGCGKT. CBS domains follow at residues 256–314 and 316–374; these read MNTQ…LVSE and LHED…WGEE.

It belongs to the ABC transporter superfamily.

Its function is as follows. Involved in a high affinity multicomponent binding-protein-dependent transport system for choline. Probably responsible for energy coupling to the transport system. In Bacillus subtilis (strain 168), this protein is Choline transport ATP-binding protein OpuBA (opuBA).